The sequence spans 262 residues: Hydroxyethylthiazole kinase (262 aa).

M50 provides a ligand contact to substrate. ATP is bound by residues R125 and T171. G198 serves as a coordination point for substrate.

Belongs to the Thz kinase family. Mg(2+) serves as cofactor.

It carries out the reaction 5-(2-hydroxyethyl)-4-methylthiazole + ATP = 4-methyl-5-(2-phosphooxyethyl)-thiazole + ADP + H(+). The protein operates within cofactor biosynthesis; thiamine diphosphate biosynthesis; 4-methyl-5-(2-phosphoethyl)-thiazole from 5-(2-hydroxyethyl)-4-methylthiazole: step 1/1. In terms of biological role, catalyzes the phosphorylation of the hydroxyl group of 4-methyl-5-beta-hydroxyethylthiazole (THZ). The chain is Hydroxyethylthiazole kinase from Escherichia coli (strain SMS-3-5 / SECEC).